A 597-amino-acid chain; its full sequence is Aspartate--tRNA(Asp/Asn) ligase (597 aa).

E175 serves as a coordination point for L-aspartate. The tract at residues 199–202 (QQYK) is aspartate. L-aspartate is bound by residues R221 and H456. Residue 221–223 (RDE) coordinates ATP. E490 is a binding site for ATP. R497 provides a ligand contact to L-aspartate. Position 542-545 (542-545 (GVDR)) interacts with ATP.

The protein belongs to the class-II aminoacyl-tRNA synthetase family. Type 1 subfamily. Homodimer.

The protein localises to the cytoplasm. The enzyme catalyses tRNA(Asx) + L-aspartate + ATP = L-aspartyl-tRNA(Asx) + AMP + diphosphate. Its function is as follows. Aspartyl-tRNA synthetase with relaxed tRNA specificity since it is able to aspartylate not only its cognate tRNA(Asp) but also tRNA(Asn). Reaction proceeds in two steps: L-aspartate is first activated by ATP to form Asp-AMP and then transferred to the acceptor end of tRNA(Asp/Asn). The chain is Aspartate--tRNA(Asp/Asn) ligase from Beijerinckia indica subsp. indica (strain ATCC 9039 / DSM 1715 / NCIMB 8712).